A 423-amino-acid chain; its full sequence is Carboxypeptidase B2 (423 aa).

Positions 1-22 (MKLCSLAVLVPIVLFCEQHVFA) are cleaved as a signal peptide. The propeptide at 23 to 114 (FQSGQVLAAL…QISNDTVSPR (92 aa)) is activation peptide. N-linked (GlcNAc...) asparagine glycosylation is found at Asn44, Asn73, and Asn85. The N-linked (GlcNAc...) (complex) asparagine glycan is linked to Asn108. Positions 122-419 (QYHSLNEIYS…AAVSKIAWHV (298 aa)) constitute a Peptidase M14 domain. Cys178 and Cys191 form a disulfide bridge. Residues His181 and Glu184 each coordinate Zn(2+). Substrate is bound by residues 181–184 (HARE) and Arg239. An N-linked (GlcNAc...) asparagine; partial glycan is attached at Asn241. 2 disulfide bridges follow: Cys250–Cys274 and Cys265–Cys279. 256–257 (NR) contacts substrate. His310 lines the Zn(2+) pocket. Residues 311–312 (SY) and Tyr363 contribute to the substrate site. The active-site Proton donor/acceptor is the Glu385.

Belongs to the peptidase M14 family. Zn(2+) serves as cofactor. In terms of processing, N-glycosylated. N-glycan at Asn-108: Hex5HexNAc4. In terms of tissue distribution, plasma; synthesized in the liver.

The protein resides in the secreted. It carries out the reaction Release of C-terminal Arg and Lys from a polypeptide.. Its activity is regulated as follows. TAFI/CPB2 is unique among carboxypeptidases in that it spontaneously inactivates with a short half-life, a property that is crucial for its role in controlling blood clot lysis. The zymogen is stabilized by interactions with the activation peptide. Release of the activation peptide increases a dynamic flap mobility and in time this leads to conformational changes that disrupt the catalytic site and expose a cryptic thrombin-cleavage site present at Arg-324. Cleaves C-terminal arginine or lysine residues from biologically active peptides such as kinins or anaphylatoxins in the circulation thereby regulating their activities. Down-regulates fibrinolysis by removing C-terminal lysine residues from fibrin that has already been partially degraded by plasmin. The polypeptide is Carboxypeptidase B2 (CPB2) (Homo sapiens (Human)).